Consider the following 80-residue polypeptide: Crustacean hyperglycemic hormones (80 aa).

3 cysteine pairs are disulfide-bonded: C13–C49, C29–C45, and C32–C58. A Valine amide modification is found at V78.

Belongs to the arthropod CHH/MIH/GIH/VIH hormone family. In terms of tissue distribution, produced by the medulla terminalis X-organ in the eyestalks and transported to the sinus gland where they are stored and released.

The protein resides in the secreted. Functionally, hormone found in the sinus gland of isopods and decapods which controls the blood sugar level. Has a secretagogue action over the amylase released from the midgut gland. May act as a stress hormone and may be involved in the control of molting and reproduction. The polypeptide is Crustacean hyperglycemic hormones (Penaeus vannamei (Whiteleg shrimp)).